The primary structure comprises 609 residues: Grainyhead-like protein 1 homolog (609 aa).

Positions 1–91 (MTQDYDNKRP…EHDHADHEHS (91 aa)) are transcription activation. The tract at residues 183-207 (SDHFTSNNQPPNSQRRTPDSTFSET) is disordered. Residues 185-206 (HFTSNNQPPNSQRRTPDSTFSE) are compositionally biased toward polar residues. The 227-residue stretch at 239-465 (AGNNFEYTLE…DLDTQPVLFI (227 aa)) folds into the Grh/CP2 DB domain. Interaction with DNA regions lie at residues 371–380 (TDFSSQKGVK) and 418–421 (RKIR).

Belongs to the grh/CP2 family. Grainyhead subfamily. Binds DNA as homodimer.

The protein resides in the nucleus. In terms of biological role, transcription factor involved in epithelial development. Binds directly to the consensus DNA sequence 5'-AACCGGTT-3' and modulates expression of epidermal-specific genes, including XK81A1. Important regulator of DSG1 in the context of epidermal differentiation. Regulates the maintenance of skin barrier. No genetic interaction with GRHL3, nor functional cooperativity due to diverse target gene selectivity during epithelia development. Functions downstream of BMP-signaling cascade modulating endogenous bmp4-responsive targets. This is Grainyhead-like protein 1 homolog from Xenopus laevis (African clawed frog).